The primary structure comprises 1609 residues: Laminin subunit gamma-1 (1609 aa).

The N-terminal stretch at 1 to 33 (MRGSHRAAPALRPRGRLWPVLAVLAAAAAAGCA) is a signal peptide. Residues 46–285 (RPQRCMPEFV…AISDFAVGGR (240 aa)) enclose the Laminin N-terminal domain. N-linked (GlcNAc...) asparagine glycans are attached at residues asparagine 60 and asparagine 134. 16 disulfides stabilise this stretch: cysteine 286–cysteine 295, cysteine 288–cysteine 305, cysteine 307–cysteine 316, cysteine 319–cysteine 339, cysteine 342–cysteine 351, cysteine 344–cysteine 367, cysteine 370–cysteine 379, cysteine 382–cysteine 395, cysteine 398–cysteine 410, cysteine 400–cysteine 416, cysteine 418–cysteine 427, cysteine 430–cysteine 442, cysteine 445–cysteine 456, cysteine 447–cysteine 463, cysteine 465–cysteine 474, and cysteine 477–cysteine 492. 4 Laminin EGF-like domains span residues 286–341 (CKCN…ECLP), 342–397 (CDCN…ACSS), 398–444 (CHCS…GCRP), and 445–494 (CSCD…GCTP). Residues 495-504 (CFCFGHSSVC) enclose the Laminin EGF-like 5; first part domain. Positions 514–689 (SISSTFQIDE…PGVPATWVES (176 aa)) constitute a Laminin IV type A domain. Asparagine 576 and asparagine 650 each carry an N-linked (GlcNAc...) asparagine glycan. The Laminin EGF-like 5; second part domain maps to 690–723 (CTCPVGYGGQFCEMCLSGYRRETPNLGPYSPCVL). Disulfide bonds link cysteine 724-cysteine 733, cysteine 726-cysteine 740, cysteine 742-cysteine 751, cysteine 754-cysteine 770, cysteine 773-cysteine 781, cysteine 775-cysteine 792, cysteine 795-cysteine 804, cysteine 807-cysteine 825, cysteine 828-cysteine 842, cysteine 830-cysteine 849, cysteine 852-cysteine 861, cysteine 864-cysteine 881, cysteine 884-cysteine 898, cysteine 886-cysteine 905, cysteine 907-cysteine 916, cysteine 919-cysteine 932, cysteine 935-cysteine 947, cysteine 937-cysteine 954, cysteine 956-cysteine 965, cysteine 968-cysteine 980, cysteine 983-cysteine 995, cysteine 985-cysteine 1001, cysteine 1003-cysteine 1012, and cysteine 1015-cysteine 1028. Laminin EGF-like domains follow at residues 724–772 (CACN…DCQP), 773–827 (CPCP…LCRL), 828–883 (CQCS…KCKA), 884–934 (CNCN…GCER), 935–982 (CDCH…GCKP), and 983–1030 (CDCH…GCQE). 2 N-linked (GlcNAc...) asparagine glycosylation sites follow: asparagine 1022 and asparagine 1107. The domain II and I stretch occupies residues 1030 to 1609 (ECPACYRLVK…CFNTPSIEKP (580 aa)). The stretch at 1038 to 1609 (VKDKVADHRV…CFNTPSIEKP (572 aa)) forms a coiled coil. At serine 1149 the chain carries Phosphoserine; by FAM20C. 8 N-linked (GlcNAc...) asparagine glycosylation sites follow: asparagine 1161, asparagine 1175, asparagine 1205, asparagine 1223, asparagine 1241, asparagine 1380, asparagine 1395, and asparagine 1439. The residue at position 1493 (serine 1493) is a Phosphoserine.

In terms of assembly, laminin is a complex glycoprotein, consisting of three different polypeptide chains (alpha, beta, gamma), which are bound to each other by disulfide bonds into a cross-shaped molecule comprising one long and three short arms with globules at each end. Gamma-1 is a subunit of laminin-1 (laminin-111 or EHS laminin), laminin-2 (laminin-211 or merosin), laminin-3 (laminin-121 or S-laminin), laminin-4 (laminin-221 or S-merosin), laminin-6 (laminin-311 or K-laminin), laminin-7 (laminin-321 or KS-laminin), laminin-8 (laminin-411), laminin-9 (laminin-421), laminin-10 (laminin-511) and laminin-11 (laminin-521). Interacts with SVEP1. As to expression, found in the basement membranes (major component).

Its subcellular location is the secreted. The protein localises to the extracellular space. The protein resides in the extracellular matrix. It is found in the basement membrane. Functionally, binding to cells via a high affinity receptor, laminin is thought to mediate the attachment, migration and organization of cells into tissues during embryonic development by interacting with other extracellular matrix components. This chain is Laminin subunit gamma-1, found in Homo sapiens (Human).